Here is a 347-residue protein sequence, read N- to C-terminus: MRPILLSGHERSLTQVKFNREGDLLFSVAKDPIINAWFSHNGERLGTYEGHNGTVWTVDVDSTSTLLVSGSADNQMRLWEVATGKCLFTWEFTTAAKRVAFSEDCSQVLVVTEQRMGFRGSLRVFRINRDPATWTQQDVEPTRTITFSGPKAVVAAFAPCDQYIVTGHEDGKVAIYYHDDKEPESGIDAELEENSTKAHTDVISDLQMSADRTYFVTSSRDKTSKLIDSKTLQVIKTYATETPLNSASIHPTKPFVIVGGGQDAMNVTTTSARQGRFETRFWHKVFEEECARLPGHFGPINTIAIHPAGIAYASGGEDGYVRVNWFDPGFFNSKLYGADLELALEDQ.

WD repeat units follow at residues 8-49 (GHER…GTYE), 50-89 (GHNG…CLFT), 146-186 (TFSG…PESG), 198-237 (AHTD…VIKT), 239-278 (ATET…GRFE), and 295-336 (GHFG…SKLY).

It belongs to the eIF-3 subunit I family. In terms of assembly, component of the eukaryotic translation initiation factor 3 (eIF-3) complex.

The protein localises to the cytoplasm. Its function is as follows. Component of the eukaryotic translation initiation factor 3 (eIF-3) complex, which is involved in protein synthesis of a specialized repertoire of mRNAs and, together with other initiation factors, stimulates binding of mRNA and methionyl-tRNAi to the 40S ribosome. The eIF-3 complex specifically targets and initiates translation of a subset of mRNAs involved in cell proliferation. This is Eukaryotic translation initiation factor 3 subunit I from Mycosarcoma maydis (Corn smut fungus).